Reading from the N-terminus, the 187-residue chain is Large ribosomal subunit protein uL6 (187 aa).

This sequence belongs to the universal ribosomal protein uL6 family. In terms of assembly, part of the 50S ribosomal subunit.

Functionally, this protein binds to the 23S rRNA, and is important in its secondary structure. It is located near the subunit interface in the base of the L7/L12 stalk, and near the tRNA binding site of the peptidyltransferase center. This Thermosynechococcus vestitus (strain NIES-2133 / IAM M-273 / BP-1) protein is Large ribosomal subunit protein uL6.